Reading from the N-terminus, the 331-residue chain is tRNA(Ile)-lysidine synthase (331 aa).

29–34 contributes to the ATP binding site; the sequence is SGGPDS.

It belongs to the tRNA(Ile)-lysidine synthase family.

It localises to the cytoplasm. The enzyme catalyses cytidine(34) in tRNA(Ile2) + L-lysine + ATP = lysidine(34) in tRNA(Ile2) + AMP + diphosphate + H(+). Functionally, ligates lysine onto the cytidine present at position 34 of the AUA codon-specific tRNA(Ile) that contains the anticodon CAU, in an ATP-dependent manner. Cytidine is converted to lysidine, thus changing the amino acid specificity of the tRNA from methionine to isoleucine. The sequence is that of tRNA(Ile)-lysidine synthase from Chlorobaculum tepidum (strain ATCC 49652 / DSM 12025 / NBRC 103806 / TLS) (Chlorobium tepidum).